The sequence spans 446 residues: Na(+)-translocating NADH-quinone reductase subunit A (446 aa).

The protein belongs to the NqrA family. As to quaternary structure, composed of six subunits; NqrA, NqrB, NqrC, NqrD, NqrE and NqrF.

The catalysed reaction is a ubiquinone + n Na(+)(in) + NADH + H(+) = a ubiquinol + n Na(+)(out) + NAD(+). Its function is as follows. NQR complex catalyzes the reduction of ubiquinone-1 to ubiquinol by two successive reactions, coupled with the transport of Na(+) ions from the cytoplasm to the periplasm. NqrA to NqrE are probably involved in the second step, the conversion of ubisemiquinone to ubiquinol. In Vibrio atlanticus (strain LGP32) (Vibrio splendidus (strain Mel32)), this protein is Na(+)-translocating NADH-quinone reductase subunit A.